Here is a 588-residue protein sequence, read N- to C-terminus: DNA ligase (588 aa).

E250 is a binding site for ATP. K252 functions as the N6-AMP-lysine intermediate in the catalytic mechanism. Positions 257, 272, 302, 342, 417, and 423 each coordinate ATP.

It belongs to the ATP-dependent DNA ligase family. It depends on Mg(2+) as a cofactor.

The enzyme catalyses ATP + (deoxyribonucleotide)n-3'-hydroxyl + 5'-phospho-(deoxyribonucleotide)m = (deoxyribonucleotide)n+m + AMP + diphosphate.. Its function is as follows. DNA ligase that seals nicks in double-stranded DNA during DNA replication, DNA recombination and DNA repair. In Nitrosopumilus maritimus (strain SCM1), this protein is DNA ligase.